Here is a 520-residue protein sequence, read N- to C-terminus: Cytochrome P450 6d3 (520 aa).

Cysteine 461 provides a ligand contact to heme.

It belongs to the cytochrome P450 family. It depends on heme as a cofactor.

Its subcellular location is the endoplasmic reticulum membrane. It localises to the microsome membrane. Its function is as follows. Metabolizes pyrethroid insecticides and other xenobiotics. This chain is Cytochrome P450 6d3 (CYP6D3), found in Musca domestica (House fly).